Consider the following 61-residue polypeptide: Protein A40 homolog (61 aa).

The Cytoplasmic portion of the chain corresponds to 1 to 11; it reads MTMNKPKTNYA. The helical; Signal-anchor for type II membrane protein transmembrane segment at 12–32 threads the bilayer; sequence GYACCVICGLIVGIIFTATLL. The Extracellular portion of the chain corresponds to 33–61; the sequence is KAVERKLIHTPLIDKTIKDAYIREDCPTD.

The protein belongs to the poxviridae A40 protein family.

The protein localises to the host membrane. This chain is Protein A40 homolog (A45R), found in Homo sapiens (Human).